The sequence spans 560 residues: MEYGKCRGIERGMGRRDFLKAATLLGATAAGAGMLAGCAPKSASEAQAQTAPAATGGLDPADVDWKYETDVVIVGSGSGGTCAAIEAAEAGADVVVFEKDKAMYGGNSALCGGYMLAAGWSTQEEITGYAGDTGEAFANQMLRWSQGLGNQDMIREACLRSGEAVDWMMDTGRTYEGASPLPPVWSCGDTEADVVPRSVYNHNAYGATEGHMATLKKRAESLSNIEIEMGCEVAHILKNAEGSVIGVQLADGSFAKARKGVVMACASVDNNLEMSKDLGLMQNVWGLTLEGAGLLAPGNPDMDSNTGDGVRMLREIGAELCMQQAVCMNDSIYVGGISDWGMSEILGKDVNIHDSSNIDAILVDKTGRRFCQDDAEWGYVMHECAQAAWKQGFTPDDPTTGYIFYVYDATGAPFFEMKGHTPDTCDTTFSADSVDGLAEFIGCDPTALASEVERWNSFCEAGLDADFGRRANMAPIATPPFYCDVVRPGPMGTFAGAKSNVEAEIIGLDGNPIPRLYGAGCIIGGNVSGAFYFGCGWSITNTVVWGREAGRNVAALEPWE.

Positions 1–48 (MEYGKCRGIERGMGRRDFLKAATLLGATAAGAGMLAGCAPKSASEAQA) form a signal peptide, tat-type signal.

This sequence belongs to the FAD-dependent oxidoreductase 2 family. As to quaternary structure, may form a membrane-associated complex with Cgr1. FAD serves as cofactor. It depends on [4Fe-4S] cluster as a cofactor. Post-translationally, predicted to be exported by the Tat system. The position of the signal peptide cleavage has not been experimentally proven.

It is found in the cell membrane. The enzyme catalyses digoxin + 2 Fe(II)-[cytochrome c] + 3 H(+) = dihydrodigoxin + 2 Fe(III)-[cytochrome c]. It catalyses the reaction digitoxin + 2 Fe(II)-[cytochrome c] + 3 H(+) = dihydrodigitoxin + 2 Fe(III)-[cytochrome c]. The catalysed reaction is digoxigenin + 2 Fe(II)-[cytochrome c] + 3 H(+) = dihydrodigoxigenin + 2 Fe(III)-[cytochrome c]. It carries out the reaction ouabain + 2 Fe(II)-[cytochrome c] + 3 H(+) = dihydroouabain + 2 Fe(III)-[cytochrome c]. The enzyme catalyses ouabagenin + 2 Fe(II)-[cytochrome c] + 3 H(+) = dihydroouabagenin + 2 Fe(III)-[cytochrome c]. Functionally, involved in the inactivation of the cardiac medication and plant natural product digoxin, thus decreasing drug efficacy and toxicity. Catalyzes the reduction of the alpha,beta-unsaturated butyrolactone ring of digoxin to the inactive metabolite dihydrodigoxin. Likely uses the cytochrome Cgr1 as the physiological electron donor, encoded by the adjacent gene in the locus. Only reduces digoxin and other cardenolide toxins, such as digitoxin, digoxigenin, ouabain and ouabagenin. Therefore is a specialized enzyme present in some gut bacteria E.lenta that protects their human host against ingested plant toxins. This Eggerthella lenta (strain ATCC 25559 / DSM 2243 / CCUG 17323 / JCM 9979 / KCTC 3265 / NCTC 11813 / VPI 0255 / 1899 B) (Eubacterium lentum) protein is Digoxin reductase.